The sequence spans 213 residues: uncharacterized protein (213 aa).

Positions 1-21 are cleaved as a signal peptide; that stretch reads MKKILFLTVICFCLSSIKAYA.

This is an uncharacterized protein from Rickettsia prowazekii (strain Madrid E).